Consider the following 206-residue polypeptide: Small ribosomal subunit protein uS3 (206 aa).

The region spanning 39–107 (IRSYINESFK…SVEVNVVGIK (69 aa)) is the KH type-2 domain.

Belongs to the universal ribosomal protein uS3 family. Part of the 30S ribosomal subunit. Forms a tight complex with proteins S10 and S14.

Functionally, binds the lower part of the 30S subunit head. Binds mRNA in the 70S ribosome, positioning it for translation. The chain is Small ribosomal subunit protein uS3 from Wolbachia sp. subsp. Brugia malayi (strain TRS).